The chain runs to 318 residues: L-lactate dehydrogenase (318 aa).

4 residues coordinate NAD(+): valine 14, aspartate 35, lysine 40, and tyrosine 66. Substrate is bound by residues arginine 89 and 121–124; that span reads NPVD. An NAD(+)-binding site is contributed by serine 144. 149-152 contributes to the substrate binding site; it reads DTAR. Residue histidine 176 is the Proton acceptor of the active site. Residue tyrosine 220 is modified to Phosphotyrosine. Threonine 229 contributes to the substrate binding site.

This sequence belongs to the LDH/MDH superfamily. LDH family. As to quaternary structure, homotetramer.

It localises to the cytoplasm. The catalysed reaction is (S)-lactate + NAD(+) = pyruvate + NADH + H(+). It participates in fermentation; pyruvate fermentation to lactate; (S)-lactate from pyruvate: step 1/1. Its function is as follows. Catalyzes the conversion of lactate to pyruvate. The polypeptide is L-lactate dehydrogenase (Staphylococcus haemolyticus (strain JCSC1435)).